Reading from the N-terminus, the 148-residue chain is Large ribosomal subunit protein uL15 (148 aa).

The tract at residues 1 to 47 is disordered; sequence MAFSLENLRPAPGSRPKSKRVGRGSSSGKGKTSSRGHKGQGRGTGKV.

It belongs to the universal ribosomal protein uL15 family. In terms of assembly, part of the 50S ribosomal subunit.

Its function is as follows. Binds to the 23S rRNA. This is Large ribosomal subunit protein uL15 from Kosmotoga olearia (strain ATCC BAA-1733 / DSM 21960 / TBF 19.5.1).